The sequence spans 316 residues: BTB/POZ domain-containing adapter for CUL3-mediated RhoA degradation protein 2 (316 aa).

The region spanning 28 to 96 (KYVQLNVGGS…LRDDTITLPQ (69 aa)) is the BTB domain. A compositionally biased stretch (polar residues) spans 268 to 279 (EATSRSRSQASP). A disordered region spans residues 268–288 (EATSRSRSQASPSEDEDTFEL). Serine 278 carries the post-translational modification Phosphoserine. Serine 280 carries the phosphoserine; by CK2 modification.

It belongs to the BACURD family. As to quaternary structure, component of the BCR(TNFAIP1) E3 ubiquitin ligase complex, at least composed of CUL3, TNFAIP1/BACURD2 and RBX1. Interacts with RHOA; with a preference for RhoA-GDP. Interacts with RHOB. Interacts with PCNA. Interacts with CSNK2B. Phosphorylation at Ser-280 by CK2 facilitates the nucleus localization and increases interaction with PCNA.

It localises to the cytoplasm. It is found in the nucleus. Its subcellular location is the endosome. The protein operates within protein modification; protein ubiquitination. Functionally, substrate-specific adapter of a BCR (BTB-CUL3-RBX1) E3 ubiquitin-protein ligase complex involved in regulation of cytoskeleton structure. The BCR(TNFAIP1) E3 ubiquitin ligase complex mediates the ubiquitination of RHOA, leading to its degradation by the proteasome, thereby regulating the actin cytoskeleton and cell migration. Its interaction with RHOB may regulate apoptosis. May enhance the PCNA-dependent DNA polymerase delta activity. The protein is BTB/POZ domain-containing adapter for CUL3-mediated RhoA degradation protein 2 (Tnfaip1) of Mus musculus (Mouse).